A 60-amino-acid chain; its full sequence is Mastoparan-VT5 (60 aa).

An N-terminal signal peptide occupies residues 1 to 27 (MKNTILILFTAFIALLGFFGMIAEPLA). AXPX repeat units follow at residues 27–30 (ADPL), 31–34 (ADPL), 37–40 (ADPD), and 41–44 (ADPE). Positions 28-45 (DPLADPLPDADPDADPET) are excised as a propeptide.

This sequence belongs to the MCD family. Mastoparan subfamily. Expressed by the venom gland.

Its subcellular location is the secreted. In terms of biological role, the synthetic peptide shows weak antimicrobial activities against a few Gram-positive bacteria (only 2 on the 11 strains tested) and the fungus C.albicans. Does not show activity against all the Gram-negative bacteria tested. Exhibits little hemolytic activity against washed human erythrocytes. This Vespa tropica (Greater banded hornet) protein is Mastoparan-VT5.